Reading from the N-terminus, the 186-residue chain is Type 1 phosphatases regulator ypi-1 (186 aa).

Polar residues predominate over residues 1-32; sequence MTSVAQRQAQPAQPSTSQTAAPTRTQTETSSP. The disordered stretch occupies residues 1–186; the sequence is MTSVAQRQAQ…SETQGPGGSK (186 aa). The span at 82-94 shows a compositional bias: low complexity; the sequence is DSSSSSDSSSSSD. A compositionally biased stretch (basic and acidic residues) spans 122–137; it reads HDHDHDGREGGCNHDH. The segment covering 138–151 has biased composition (basic residues); sequence GRGRKHGNKGKKTE.

This sequence belongs to the YPI1 family.

It localises to the nucleus. Functionally, regulator of type 1 phosphatases which maintains protein phosphatase activity under strict control. This Neurospora crassa (strain ATCC 24698 / 74-OR23-1A / CBS 708.71 / DSM 1257 / FGSC 987) protein is Type 1 phosphatases regulator ypi-1 (ypi-1).